We begin with the raw amino-acid sequence, 376 residues long: Queuine tRNA-ribosyltransferase (376 aa).

Catalysis depends on D89, which acts as the Proton acceptor. Substrate is bound by residues 89–93, D143, Q194, and G221; that span reads DSGGF. The interval 252–258 is RNA binding; it reads GVGIPSN. D271 functions as the Nucleophile in the catalytic mechanism. An RNA binding; important for wobble base 34 recognition region spans residues 276–280; it reads ARNGR. Zn(2+)-binding residues include C309, C311, C314, and H340.

Belongs to the queuine tRNA-ribosyltransferase family. As to quaternary structure, homodimer. Within each dimer, one monomer is responsible for RNA recognition and catalysis, while the other monomer binds to the replacement base PreQ1. It depends on Zn(2+) as a cofactor.

It carries out the reaction 7-aminomethyl-7-carbaguanine + guanosine(34) in tRNA = 7-aminomethyl-7-carbaguanosine(34) in tRNA + guanine. It functions in the pathway tRNA modification; tRNA-queuosine biosynthesis. In terms of biological role, catalyzes the base-exchange of a guanine (G) residue with the queuine precursor 7-aminomethyl-7-deazaguanine (PreQ1) at position 34 (anticodon wobble position) in tRNAs with GU(N) anticodons (tRNA-Asp, -Asn, -His and -Tyr). Catalysis occurs through a double-displacement mechanism. The nucleophile active site attacks the C1' of nucleotide 34 to detach the guanine base from the RNA, forming a covalent enzyme-RNA intermediate. The proton acceptor active site deprotonates the incoming PreQ1, allowing a nucleophilic attack on the C1' of the ribose to form the product. After dissociation, two additional enzymatic reactions on the tRNA convert PreQ1 to queuine (Q), resulting in the hypermodified nucleoside queuosine (7-(((4,5-cis-dihydroxy-2-cyclopenten-1-yl)amino)methyl)-7-deazaguanosine). The sequence is that of Queuine tRNA-ribosyltransferase from Clostridium botulinum (strain Okra / Type B1).